A 790-amino-acid chain; its full sequence is Chorion peroxidase (790 aa).

The N-terminal stretch at 1 to 16 (MAKKVLLLSLYSAVLS) is a signal peptide. The propeptide occupies 17-209 (TWFGFGYVQC…ARIPRAIRKR (193 aa)). Cys210 bears the N-acetylcysteine; in Chorion peroxidase light chain mark. A disulfide bridge connects residues Cys216 and Cys229. Residue Trp259 is glycosylated (N-linked (Man) tryptophan). The active-site Proton acceptor is the His305. Asn327 is a glycosylation site (N-linked (GlcNAc...) asparagine). Tyr353 is modified (3',4'-dihydroxyphenylalanine). The cysteines at positions 433 and 440 are disulfide-linked. Trp479 carries an N-linked (Man) tryptophan glycan. His551 provides a ligand contact to heme b. Trp680 is a glycosylation site (N-linked (Man) tryptophan). Cys746 and Cys774 form a disulfide bridge. The N-linked (Man) tryptophan glycan is linked to Trp785.

Belongs to the peroxidase family. XPO subfamily. Heterodimer. Heme b is required as a cofactor. N-glycosylated on Trp by mannose and on Asn by N-acetylglucosamine. Post-translationally, there is a hexose glycosylation of an unidentified residue between 654 and 708; Trp-680 is conserved in closely related species and is probably mannosylated.

Its subcellular location is the secreted. It carries out the reaction 2 a phenolic donor + H2O2 = 2 a phenolic radical donor + 2 H2O. With respect to regulation, extremely resistant to denaturating agents, such as SDS and organic solvents. In terms of biological role, involved in the formation of a rigid and insoluble egg chorion by catalyzing chorion protein cross-linking through dityrosine formation and phenol oxidase-catalyzed chorion melanization. The chain is Chorion peroxidase (pxt) from Aedes aegypti (Yellowfever mosquito).